Reading from the N-terminus, the 134-residue chain is Cytochrome b5 (134 aa).

At Ala2 the chain carries N-acetylalanine. Lys7, Lys10, and Lys19 each carry N6-acetyllysine. The 77-residue stretch at 9–85 (VKYYTLEEIQ…SKTFIIGELH (77 aa)) folds into the Cytochrome b5 heme-binding domain. Heme-binding residues include His44 and His68. Residues 109-131 (WWTNWVIPAISALVVSLMYHFYT) form a helical membrane-spanning segment.

It belongs to the cytochrome b5 family.

It is found in the endoplasmic reticulum membrane. Its subcellular location is the microsome membrane. The protein resides in the cytoplasm. In terms of biological role, cytochrome b5 is a membrane-bound hemoprotein functioning as an electron carrier for several membrane-bound oxygenases. This Sus scrofa (Pig) protein is Cytochrome b5 (CYB5A).